The sequence spans 566 residues: MSAGKKHARDGEDQGARLVKKAKTADTQTDSDPAALKTDKKKKDKKDKKERKEKKEKKSKKEDAEEDSEELQNGDSAAVDSEPKPEKEKKEKNNKKDKKDKKDKKDKLKSSGAPTTNGIAQDGEANAATTTPNGSAQRNGAAYSYQQTKTLDAIPEDEIKEFLAKQEIAIADPLGANLRPIIHFSHLPTSTLTSKKPFASFTAPTPIQAASWPFALSGRDVIGIAETGSGKTMAFAVPCIESLASSPKPNHAKGDRTAYARAVVVSPTRELAMQTHAAMSSLASLVGLSVVCLYGGAPKDDQRALLRKNSGADIIVATPGRLKDFLSEGCVSLSDVMFAVLDEADRMLDKGFEEDIKLILGSCRPREKRQTLMFTATWPTSVRGLAEGFMIDPVKATIGNRTRAGEEGEGNGSTELQANIRIEQKVEVVDPRGKEQRLLELLKEAQKGSAKNDRILVFCLYKKEAVRVEQNLERRGIRVCSIHGDLRQDQRTRSLESFKAGTTSVLVATDVAARGLDIPEVKLVINVTFPLTIEDYVHRIGRTGRAGKKGKAITLFTEHDKSHSGS.

The tract at residues 1–139 (MSAGKKHARD…TTPNGSAQRN (139 aa)) is disordered. Positions 39-58 (DKKKKDKKDKKERKEKKEKK) are enriched in basic residues. Residues 81–91 (SEPKPEKEKKE) show a composition bias toward basic and acidic residues. Basic residues predominate over residues 92–102 (KNNKKDKKDKK). The span at 127 to 139 (AATTTPNGSAQRN) shows a compositional bias: polar residues. The short motif at 182–209 (IHFSHLPTSTLTSKKPFASFTAPTPIQA) is the Q motif element. One can recognise a Helicase ATP-binding domain in the interval 212-396 (WPFALSGRDV…EGFMIDPVKA (185 aa)). Position 225 to 232 (225 to 232 (AETGSGKT)) interacts with ATP. The DEAD box motif lies at 342–345 (DEAD). One can recognise a Helicase C-terminal domain in the interval 433 to 566 (GKEQRLLELL…TEHDKSHSGS (134 aa)).

It belongs to the DEAD box helicase family. DDX5/DBP2 subfamily.

The protein resides in the nucleus. Its subcellular location is the nucleolus. The catalysed reaction is ATP + H2O = ADP + phosphate + H(+). Functionally, ATP-dependent RNA helicase required for 60S ribosomal subunit synthesis. Involved in efficient pre-rRNA processing, predominantly at site A3, which is necessary for the normal formation of 25S and 5.8S rRNAs. This chain is ATP-dependent RNA helicase DBP3 (DBP3), found in Chaetomium globosum (strain ATCC 6205 / CBS 148.51 / DSM 1962 / NBRC 6347 / NRRL 1970) (Soil fungus).